Consider the following 295-residue polypeptide: Ankyrin repeat and SOCS box protein 17 (295 aa).

Residues 146 to 176 (SGITPLLYVAQTRQSNILKILLQYGILEREN) form an ANK repeat. The SOCS box domain maps to 232 to 295 (LGRRPIISNW…CLQNYLNLES (64 aa)).

Belongs to the ankyrin SOCS box (ASB) family.

It participates in protein modification; protein ubiquitination. Functionally, may be a substrate-recognition component of a SCF-like ECS (Elongin-Cullin-SOCS-box protein) E3 ubiquitin-protein ligase complex which mediates the ubiquitination and subsequent proteasomal degradation of target proteins. This is Ankyrin repeat and SOCS box protein 17 (ASB17) from Bos taurus (Bovine).